Reading from the N-terminus, the 206-residue chain is Small ribosomal subunit protein uS4c (206 aa).

2 stretches are compositionally biased toward basic residues: residues 1-13 and 25-34; these read MSRYRGPKLRITR and QSKKKGRPGQ. The disordered stretch occupies residues 1–50; it reads MSRYRGPKLRITRRLGALPGLTQKQSKKKGRPGQHGKSNEADNSKKTTEY. A compositionally biased stretch (basic and acidic residues) spans 37–50; the sequence is KSNEADNSKKTTEY. In terms of domain architecture, S4 RNA-binding spans 95–157; that stretch reads MRLDTICFTL…ATSKNLVEGN (63 aa).

The protein belongs to the universal ribosomal protein uS4 family. In terms of assembly, part of the 30S ribosomal subunit. Contacts protein S5. The interaction surface between S4 and S5 is involved in control of translational fidelity.

The protein localises to the plastid. Its subcellular location is the chloroplast. One of the primary rRNA binding proteins, it binds directly to 16S rRNA where it nucleates assembly of the body of the 30S subunit. Functionally, with S5 and S12 plays an important role in translational accuracy. This Trieres chinensis (Marine centric diatom) protein is Small ribosomal subunit protein uS4c (rps4).